The chain runs to 352 residues: Methylthioribose-1-phosphate isomerase (352 aa).

Residues 55-57 (RGA), R98, and Q201 each bind substrate. D242 (proton donor) is an active-site residue. 252-253 (NK) lines the substrate pocket.

This sequence belongs to the eIF-2B alpha/beta/delta subunits family. MtnA subfamily.

The catalysed reaction is 5-(methylsulfanyl)-alpha-D-ribose 1-phosphate = 5-(methylsulfanyl)-D-ribulose 1-phosphate. The protein operates within amino-acid biosynthesis; L-methionine biosynthesis via salvage pathway; L-methionine from S-methyl-5-thio-alpha-D-ribose 1-phosphate: step 1/6. Catalyzes the interconversion of methylthioribose-1-phosphate (MTR-1-P) into methylthioribulose-1-phosphate (MTRu-1-P). The sequence is that of Methylthioribose-1-phosphate isomerase from Methylococcus capsulatus (strain ATCC 33009 / NCIMB 11132 / Bath).